The sequence spans 544 residues: Glucose starvation modulator protein 1 (544 aa).

Residues 20 to 48 (CVFCHSKHLQCSNERPCKNCMKRNLGDQC) constitute a DNA-binding region (zn(2)-C6 fungal-type). A disordered region spans residues 65–93 (KKMKSRTNSISSSYRSPSVSESPQNPYTH). A compositionally biased stretch (low complexity) spans 70–86 (RTNSISSSYRSPSVSES). Positions 403–475 (SLIDYEKLLL…FKLFKSVAVG (73 aa)) constitute a PAS domain.

This sequence belongs to the ERT1/acuK family.

The protein resides in the nucleus. Functionally, transcription factor which regulates nonfermentable carbon utilization. The chain is Glucose starvation modulator protein 1 (GSM1) from Debaryomyces hansenii (strain ATCC 36239 / CBS 767 / BCRC 21394 / JCM 1990 / NBRC 0083 / IGC 2968) (Yeast).